The chain runs to 963 residues: Iron-responsive element-binding protein 2 (963 aa).

Positions 512, 578, and 581 each coordinate [4Fe-4S] cluster.

This sequence belongs to the aconitase/IPM isomerase family. In terms of assembly, interacts with RBCK1 only in iron-rich conditions. Interacts (when associated with the 4Fe-4S) with FBXL5. Interacts with CIAO1 and CIAO2A. [4Fe-4S] cluster is required as a cofactor. Post-translationally, ubiquitinated and degraded by the proteasome in presence of high level of iron and oxygen. Ubiquitinated by a SCF complex containing FBXL5. Upon iron and oxygen depletion FBXL5 is degraded, preventing ubiquitination and allowing its RNA-binding activity. In terms of tissue distribution, ubiquitously expressed in rat tissues, the highest amounts present in skeletal muscle and heart.

The protein resides in the cytoplasm. In terms of biological role, RNA-binding protein that binds to iron-responsive elements (IRES), which are stem-loop structures found in the 5'-UTR of ferritin, and delta aminolevulinic acid synthase mRNAs, and in the 3'-UTR of transferrin receptor mRNA. Binding to the IRE element in ferritin results in the repression of its mRNA translation. Binding of the protein to the transferrin receptor mRNA inhibits the degradation of this otherwise rapidly degraded mRNA. This chain is Iron-responsive element-binding protein 2 (Ireb2), found in Rattus norvegicus (Rat).